The sequence spans 147 residues: Ribonuclease VapC43 (147 aa).

The region spanning 3-139 (CVDVNVLVYA…ARFRRLRWRH (137 aa)) is the PINc domain. D5 and D108 together coordinate Mg(2+).

Belongs to the PINc/VapC protein family. Mg(2+) serves as cofactor.

Functionally, toxic component of a type II toxin-antitoxin (TA) system. An RNase. Its toxic effect is neutralized by coexpression with cognate antitoxin VapB43. The protein is Ribonuclease VapC43 of Mycobacterium tuberculosis (strain CDC 1551 / Oshkosh).